Reading from the N-terminus, the 502-residue chain is Mannitol 2-dehydrogenase (502 aa).

NAD(+) is bound at residue 37 to 48 (IVHIGVGGFHRA).

Belongs to the mannitol dehydrogenase family. As to quaternary structure, monomer.

It catalyses the reaction D-mannitol + NAD(+) = D-fructose + NADH + H(+). In terms of biological role, catalyzes the NAD(H)-dependent interconversion of D-fructose and D-mannitol in the mannitol metabolic pathway. This Neosartorya fischeri (strain ATCC 1020 / DSM 3700 / CBS 544.65 / FGSC A1164 / JCM 1740 / NRRL 181 / WB 181) (Aspergillus fischerianus) protein is Mannitol 2-dehydrogenase.